A 38-amino-acid polypeptide reads, in one-letter code: Photosystem II reaction center protein L (38 aa).

Residues 17–37 (SLYWGLLLIXVLAVLFSNYFF) traverse the membrane as a helical segment.

It belongs to the PsbL family. As to quaternary structure, PSII is composed of 1 copy each of membrane proteins PsbA, PsbB, PsbC, PsbD, PsbE, PsbF, PsbH, PsbI, PsbJ, PsbK, PsbL, PsbM, PsbT, PsbX, PsbY, PsbZ, Psb30/Ycf12, at least 3 peripheral proteins of the oxygen-evolving complex and a large number of cofactors. It forms dimeric complexes.

The protein resides in the plastid. Its subcellular location is the chloroplast thylakoid membrane. In terms of biological role, one of the components of the core complex of photosystem II (PSII). PSII is a light-driven water:plastoquinone oxidoreductase that uses light energy to abstract electrons from H(2)O, generating O(2) and a proton gradient subsequently used for ATP formation. It consists of a core antenna complex that captures photons, and an electron transfer chain that converts photonic excitation into a charge separation. This subunit is found at the monomer-monomer interface and is required for correct PSII assembly and/or dimerization. The protein is Photosystem II reaction center protein L of Allium textile (Textile onion).